Consider the following 668-residue polypeptide: Spartin (668 aa).

The residue at position 1 (Met1) is an N-acetylmethionine. The region spanning 16 to 94 (IKEAYKKAFV…LQNVRTRLEI (79 aa)) is the MIT domain. The tract at residues 110-176 (VPKLYPEFPP…PSEAPPAYTP (67 aa)) is disordered. Positions 118 to 127 (PPKDMSEKSP) are enriched in basic and acidic residues. Ser126 carries the post-translational modification Phosphoserine. Residues 128–162 (EPQSLSSLPQHSEVNGSTSTASAESSSTPTTLSLP) are compositionally biased toward low complexity. The segment at 190-380 (ESGEFSSVGE…QLDPSSKDVR (191 aa)) is ubiquitin-binding region (UBR) domain. The LC3-interacting region (LIR); mediates interaction with MAP1LC3A AND MAP1LC3C motif lies at 193–200 (EFSSVGEN). The segment at 348 to 396 (FQIPGISGSASDQLKEASGTDVRQLDPSSKDVRQKGKRGKKTKGTSSEE) is disordered. Lys362 participates in a covalent cross-link: Glycyl lysine isopeptide (Lys-Gly) (interchain with G-Cter in ubiquitin). The 185-residue stretch at 427 to 611 (ILSGASWVSW…YNIDNIGIKA (185 aa)) folds into the Senescence domain. The tract at residues 431-503 (ASWVSWGLVK…LVDGVCTVAN (73 aa)) is required for localization to lipid droplets. Ser470 is subject to Phosphoserine. A disordered region spans residues 631–668 (IDNSKGENPGGGASANLKGEKDEQKEGPEKNGAKKKDK). Positions 648–668 (KGEKDEQKEGPEKNGAKKKDK) are enriched in basic and acidic residues.

Interacts with ITCH and WWP1. Interacts (via MIT domain) with IST1; leading to the recruitment of SPART to midbodies. Interacts with MAP1LC3A and MAP1LC3C. Post-translationally, ubiquitinated; ubiquitination does not require ITCH and WWP1.

The protein localises to the cytoplasm. It localises to the midbody. The protein resides in the lipid droplet. In terms of biological role, lipophagy receptor that plays an important role in lipid droplet (LD) turnover in motor neurons. Localizes to LDs and interacts with components of the autophagy machinery, such as MAP1LC3A/C proteins to deliver LDs to autophagosomes for degradation via lipophagy. Lipid transfer protein required for lipid droplet degradation, including by lipophagy. Can bind and transfer all lipid species found in lipid droplets, from phospholipids to triglycerides and sterol esters but the direction of lipid transfer by spartin and its cargos are unknown. May be implicated in endosomal trafficking, or microtubule dynamics, or both. Participates in cytokinesis. This chain is Spartin, found in Bos taurus (Bovine).